The chain runs to 444 residues: Probable glycine dehydrogenase (decarboxylating) subunit 1 (444 aa).

This sequence belongs to the GcvP family. N-terminal subunit subfamily. As to quaternary structure, the glycine cleavage system is composed of four proteins: P, T, L and H. In this organism, the P 'protein' is a heterodimer of two subunits.

The catalysed reaction is N(6)-[(R)-lipoyl]-L-lysyl-[glycine-cleavage complex H protein] + glycine + H(+) = N(6)-[(R)-S(8)-aminomethyldihydrolipoyl]-L-lysyl-[glycine-cleavage complex H protein] + CO2. In terms of biological role, the glycine cleavage system catalyzes the degradation of glycine. The P protein binds the alpha-amino group of glycine through its pyridoxal phosphate cofactor; CO(2) is released and the remaining methylamine moiety is then transferred to the lipoamide cofactor of the H protein. The chain is Probable glycine dehydrogenase (decarboxylating) subunit 1 from Chlorobium phaeobacteroides (strain DSM 266 / SMG 266 / 2430).